A 263-amino-acid chain; its full sequence is Fructose-bisphosphate aldolase class 1 (263 aa).

Residue K177 is the Schiff-base intermediate with dihydroxyacetone-P of the active site.

It belongs to the DeoC/FbaB aldolase family.

The enzyme catalyses beta-D-fructose 1,6-bisphosphate = D-glyceraldehyde 3-phosphate + dihydroxyacetone phosphate. Its function is as follows. Has aldolase activity with fructose 1,6-bisphosphate. May play a role in the biosynthesis of aromatic amino acids (AroAA). The chain is Fructose-bisphosphate aldolase class 1 (fba1) from Halobacterium salinarum (strain ATCC 29341 / DSM 671 / R1).